The sequence spans 219 residues: Glycosylphosphatidylinositol anchor biosynthesis protein 11 (219 aa).

At 1 to 45 the chain is on the cytoplasmic side; the sequence is MPAKKRTRKTVKKTVSFSDDTTLTTHQNREKKNVDHDRPPVYVRK. S16 is subject to Phosphoserine. Residues 46–66 form a helical membrane-spanning segment; sequence TPLMTFPYHLVALLYYYVFVS. S67 is a topological domain (lumenal). A helical transmembrane segment spans residues 68–88; that stretch reads NFNTVKLLSFLIPTQVAYLVL. The Cytoplasmic segment spans residues 89 to 108; the sequence is QFNKCTVYGNKIIKINYSLT. A helical transmembrane segment spans residues 109 to 129; the sequence is IICLGVTFLLSFPTMLLTILF. At 130–135 the chain is on the lumenal side; it reads GAPLMD. A helical transmembrane segment spans residues 136 to 156; that stretch reads LLWETWLLSLHFAFLAYPAVY. Over 157-170 the chain is Cytoplasmic; that stretch reads SVFNCDFKVGLWKK. A helical transmembrane segment spans residues 171–191; that stretch reads YFIFIVVGGWISCVVIPLDWD. The Lumenal segment spans residues 192–198; sequence RDWQNWP. A helical membrane pass occupies residues 199 to 217; that stretch reads IPIVVGGYLGALVGYTIGA. The Cytoplasmic portion of the chain corresponds to 218-219; the sequence is YI.

This sequence belongs to the PIGF family.

Its subcellular location is the endoplasmic reticulum membrane. It functions in the pathway glycolipid biosynthesis; glycosylphosphatidylinositol-anchor biosynthesis. In terms of biological role, acts in the GPI biosynthetic pathway between GlcNAc-PI synthesis and GPI transfer to protein. Required for the formation of complete GPI precursors CP1 and CP2. The polypeptide is Glycosylphosphatidylinositol anchor biosynthesis protein 11 (GPI11) (Saccharomyces cerevisiae (strain ATCC 204508 / S288c) (Baker's yeast)).